The primary structure comprises 635 residues: Very-long-chain aldehyde decarbonylase GL1-6 (635 aa).

Transmembrane regions (helical) follow at residues 46–66, 100–120, 127–147, and 183–203; these read LLNFMVFPMLLLRLLYGQLWI, IILTALVFYLVSATMPQAQVA, GMVVTAVLHAGPVEFLYYWLH, and VVYFVLLAIPILSTVATGTVS. In terms of domain architecture, Fatty acid hydroxylase spans 139-273; the sequence is VEFLYYWLHR…MPVYDYIYGT (135 aa).

Belongs to the sterol desaturase family. In terms of assembly, homodimer.

The protein resides in the endoplasmic reticulum membrane. The catalysed reaction is a long-chain fatty aldehyde + 2 NADPH + O2 + H(+) = a long-chain alkane + formate + 2 NADP(+) + H2O. Functionally, aldehyde decarbonylase involved in the conversion of aldehydes to alkanes. Core component of a very-long-chain alkane synthesis complex. The polypeptide is Very-long-chain aldehyde decarbonylase GL1-6 (Oryza sativa subsp. indica (Rice)).